The following is a 90-amino-acid chain: DNA-directed RNA polymerase subunit omega (90 aa).

Belongs to the RNA polymerase subunit omega family. As to quaternary structure, the RNAP catalytic core consists of 2 alpha, 1 beta, 1 beta' and 1 omega subunit. When a sigma factor is associated with the core the holoenzyme is formed, which can initiate transcription.

It catalyses the reaction RNA(n) + a ribonucleoside 5'-triphosphate = RNA(n+1) + diphosphate. Functionally, promotes RNA polymerase assembly. Latches the N- and C-terminal regions of the beta' subunit thereby facilitating its interaction with the beta and alpha subunits. The chain is DNA-directed RNA polymerase subunit omega from Saccharophagus degradans (strain 2-40 / ATCC 43961 / DSM 17024).